Consider the following 64-residue polypeptide: Thrombin-like enzyme collinein-4 (64 aa).

Intrachain disulfides connect cysteine 5-cysteine 23 and cysteine 34-cysteine 51.

In terms of assembly, monomer. As to expression, expressed by the vanom gland.

It is found in the secreted. Its function is as follows. Thrombin-like snake venom serine protease. The chain is Thrombin-like enzyme collinein-4 from Crotalus durissus collilineatus (Brazilian rattlesnake).